The following is a 322-amino-acid chain: Sideroflexin-1 (322 aa).

Serine 2 is subject to N-acetylserine. Residues 2-102 (SGEVPPNINI…MSAQVPMNMT (101 aa)) lie on the Mitochondrial matrix side of the membrane. The helical transmembrane segment at 103–120 (ITGCMMTFYRTTPAVLFW) threads the bilayer. The Mitochondrial intermembrane portion of the chain corresponds to 121-146 (QWINQSFNAVVNYTNRSGDAPLTVNE). A helical membrane pass occupies residues 147–167 (LGTAYVSATTGAVATALGLNA). Residues 168-174 (LTKHVSP) lie on the Mitochondrial matrix side of the membrane. The helical transmembrane segment at 175-195 (LIGRFVPFAAVAAANCINIPL) threads the bilayer. Residues 196–228 (MRQRELKVGIPVTDENGTRLGESTNAAKQAITQ) are Mitochondrial intermembrane-facing. A helical transmembrane segment spans residues 229 to 249 (VVISRILMAAPGMAIPPFIMN). Topologically, residues 250–266 (TLEKKAFLKRFPWMSAP) are mitochondrial matrix. Residues 267 to 287 (IQVTLVGFCLVFATPLCCALF) traverse the membrane as a helical segment. Residues 288–322 (PQKSSMSVTSLEDDLQASIQKSHPELRRVYFNKGL) lie on the Mitochondrial intermembrane side of the membrane.

The protein belongs to the sideroflexin family.

It localises to the mitochondrion inner membrane. The enzyme catalyses L-serine(in) = L-serine(out). It catalyses the reaction L-alanine(in) = L-alanine(out). It carries out the reaction L-cysteine(in) = L-cysteine(out). In terms of biological role, amino acid transporter importing serine, an essential substrate of the mitochondrial branch of the one-carbon pathway, into mitochondria. Mitochondrial serine is then converted to glycine and formate, which exits to the cytosol where it is used to generate the charged folates that serve as one-carbon donors. May also transport other amino acids including alanine and cysteine. In Rattus norvegicus (Rat), this protein is Sideroflexin-1 (Sfxn1).